Reading from the N-terminus, the 364-residue chain is Formate dehydrogenase (364 aa).

Substrate-binding residues include V93 and N119. NAD(+) contacts are provided by residues 174-175, D195, 230-234, T256, D282, and 311-314; these read RI, PLHAG, and HYSG.

The protein belongs to the D-isomer specific 2-hydroxyacid dehydrogenase family. FDH subfamily. In terms of assembly, homodimer.

It is found in the cytoplasm. It carries out the reaction formate + NAD(+) = CO2 + NADH. Cu(2+), Hg and p-chloromercuribenzoate are strong inhibitors of enzyme activity and Ca(2+), Mg(2+), Zn(2+), Mn(2+), Cd(2+) and Sn(2+) have no effect on activity indicating a cysteine residue in the protein is essential for enzyme activity or to maintain the proper structure of the enzyme. Nitrite and nitrate inhibit some enzyme activity, however cyanide, azide, thiocyanate and cyanate are strong inhibitors of the enzymatic reaction. The inhibition of cyanide is competitive with formate and reversible. In terms of biological role, catalyzes the NAD(+)-dependent oxidation of formate to carbon dioxide. Formate oxidation is the final step in the methanol oxidation pathway in methylotrophic microorganisms. Has a role in the detoxification of exogenous formate in non-methylotrophic organisms. The chain is Formate dehydrogenase from Candida boidinii (Yeast).